The following is an 85-amino-acid chain: Small ribosomal subunit protein bS20 (85 aa).

A disordered region spans residues 1-22; sequence MANIKSAIKRAKLSEERRAHNA.

It belongs to the bacterial ribosomal protein bS20 family.

In terms of biological role, binds directly to 16S ribosomal RNA. This is Small ribosomal subunit protein bS20 from Bacillus cytotoxicus (strain DSM 22905 / CIP 110041 / 391-98 / NVH 391-98).